Here is an 82-residue protein sequence, read N- to C-terminus: Small ribosomal subunit protein bS16 (82 aa).

This sequence belongs to the bacterial ribosomal protein bS16 family.

This is Small ribosomal subunit protein bS16 from Klebsiella pneumoniae subsp. pneumoniae (strain ATCC 700721 / MGH 78578).